The sequence spans 409 residues: LysM domain-containing GPI-anchored protein LYP6 (409 aa).

An N-terminal signal peptide occupies residues 1 to 27 (MAGWPAAEAAGALVVAILAAAAGGAAG). Intrachain disulfides connect cysteine 34–cysteine 100, cysteine 40–cysteine 166, cysteine 98–cysteine 164, and cysteine 100–cysteine 166. Residues 110-160 (VRYSARPADTLASVADVVFAGLASADQIRTANGLSAEDPDAPLDAGATLVV) enclose the LysM 1 domain. N-linked (GlcNAc...) asparagine glycosylation occurs at asparagine 168. Positions 179 to 222 (LSYVVRVGDTVQSIAATHATTVTDISNVNAMGSPIVAPGDILAI) constitute a LysM 2 domain. 2 disulfide bridges follow: cysteine 227/cysteine 259 and cysteine 254/cysteine 282. N-linked (GlcNAc...) asparagine glycosylation is present at asparagine 244. 3 N-linked (GlcNAc...) asparagine glycosylation sites follow: asparagine 291, asparagine 302, and asparagine 313. The disordered stretch occupies residues 353–387 (SPAPGAGEAGGDIPGFPGSSNVSPANGPSGSVSQA). Over residues 370–387 (GSSNVSPANGPSGSVSQA) the composition is skewed to polar residues. Residue alanine 387 is the site of GPI-anchor amidated alanine attachment. The propeptide at 388-409 (ASVNRPHQIVALILSVALYFQM) is removed in mature form.

In terms of assembly, interacts with LYP4. Interacts with CERK1. Interacts with CEBIP. As to expression, expressed in roots and leaves.

Its subcellular location is the cell membrane. Functionally, functions in innate immunity. Functions as a pattern recognition receptor (PRR), sensing bacterial peptidoglycan (PGN) and fungal chitin at the cell surface. Involved in resistance against the bacterial pathogen Xanthomonas oryzae pv. oryzae (Xoo) and the fungal pathogen Magnaporthe oryzae. Binds PGN and fungal chitin in vitro. Involved in microbe-associated molecular patterns (MAMPs) perception and participates in the activation of defense genes against the bacterial pathogen Xanthomonas oryzae pv. oryzicola (Xoc) or the fungal pathogen Magnaporthe oryzae. The chain is LysM domain-containing GPI-anchored protein LYP6 from Oryza sativa subsp. japonica (Rice).